Here is a 254-residue protein sequence, read N- to C-terminus: Thiazole synthase (254 aa).

The active-site Schiff-base intermediate with DXP is the Lys-95. 1-deoxy-D-xylulose 5-phosphate-binding positions include Gly-156, 182 to 183, and 204 to 205; these read AG and NT.

Belongs to the ThiG family. As to quaternary structure, homotetramer. Forms heterodimers with either ThiH or ThiS.

The protein resides in the cytoplasm. The enzyme catalyses [ThiS sulfur-carrier protein]-C-terminal-Gly-aminoethanethioate + 2-iminoacetate + 1-deoxy-D-xylulose 5-phosphate = [ThiS sulfur-carrier protein]-C-terminal Gly-Gly + 2-[(2R,5Z)-2-carboxy-4-methylthiazol-5(2H)-ylidene]ethyl phosphate + 2 H2O + H(+). It participates in cofactor biosynthesis; thiamine diphosphate biosynthesis. Its function is as follows. Catalyzes the rearrangement of 1-deoxy-D-xylulose 5-phosphate (DXP) to produce the thiazole phosphate moiety of thiamine. Sulfur is provided by the thiocarboxylate moiety of the carrier protein ThiS. In vitro, sulfur can be provided by H(2)S. The sequence is that of Thiazole synthase from Shewanella sp. (strain MR-7).